We begin with the raw amino-acid sequence, 398 residues long: GTPase Obg (398 aa).

Positions 1–159 (MKFVDEAPIS…RNLKLELKVL (159 aa)) constitute an Obg domain. The tract at residues 128–148 (TRFKSSTNRVPRKTTPGTEGE) is disordered. In terms of domain architecture, OBG-type G spans 160–333 (ADVGMLGLPN…LSGKIMDHLE (174 aa)). GTP is bound by residues 166-173 (GLPNAGKS), 191-195 (FTTLV), 213-216 (DIPG), 283-286 (NKID), and 314-316 (SAL). Ser-173 and Thr-193 together coordinate Mg(2+).

Belongs to the TRAFAC class OBG-HflX-like GTPase superfamily. OBG GTPase family. Monomer. Mg(2+) is required as a cofactor.

It localises to the cytoplasm. Functionally, an essential GTPase which binds GTP, GDP and possibly (p)ppGpp with moderate affinity, with high nucleotide exchange rates and a fairly low GTP hydrolysis rate. Plays a role in control of the cell cycle, stress response, ribosome biogenesis and in those bacteria that undergo differentiation, in morphogenesis control. This is GTPase Obg from Cellvibrio japonicus (strain Ueda107) (Pseudomonas fluorescens subsp. cellulosa).